A 207-amino-acid polypeptide reads, in one-letter code: 2,3-bisphosphoglycerate-dependent phosphoglycerate mutase (207 aa).

Residues 10–17, 23–24, Arg62, 89–92, Lys100, 116–117, and 160–161 contribute to the substrate site; these read RHGQSEWN, TG, ERDY, RR, and GN. The Tele-phosphohistidine intermediate role is filled by His11. Glu89 (proton donor/acceptor) is an active-site residue.

The protein belongs to the phosphoglycerate mutase family. BPG-dependent PGAM subfamily. In terms of assembly, homodimer.

The catalysed reaction is (2R)-2-phosphoglycerate = (2R)-3-phosphoglycerate. Its pathway is carbohydrate degradation; glycolysis; pyruvate from D-glyceraldehyde 3-phosphate: step 3/5. Its function is as follows. Catalyzes the interconversion of 2-phosphoglycerate and 3-phosphoglycerate. This chain is 2,3-bisphosphoglycerate-dependent phosphoglycerate mutase, found in Nitrobacter hamburgensis (strain DSM 10229 / NCIMB 13809 / X14).